A 434-amino-acid polypeptide reads, in one-letter code: Acyl transferase 15 (434 aa).

Catalysis depends on proton acceptor residues histidine 164 and aspartate 371.

Belongs to the plant acyltransferase family.

In terms of biological role, involved in the incorporation of ferulate into the cell wall. The chain is Acyl transferase 15 from Oryza sativa subsp. japonica (Rice).